A 541-amino-acid polypeptide reads, in one-letter code: Calcium/calmodulin-dependent protein kinase kinase (541 aa).

Residues 83–106 (AVQEDDEAGPHSSNNLAATMSPNL) form a disordered region. Over residues 93–106 (HSSNNLAATMSPNL) the composition is skewed to polar residues. In terms of domain architecture, Protein kinase spans 130 to 411 (YRLMEEIGQG…LHEVKVHTWV (282 aa)). ATP contacts are provided by residues 136-144 (IGQGSYGIV) and Lys159. Residues 169–190 (NFACFRQPPPRRNKENAAPSVL) are RP domain. Residue Asp276 is the Proton acceptor of the active site. Positions 437–442 (ENCVRV) are autoinhibitory domain. Residues 440–465 (VRVIPRLDTLILVKAMGHRKRFGNPF) form a calmodulin-binding region. The interval 462–512 (GNPFRNKLSAQSSIRDRRKSSSVKDPTYVPPPNSPPATSNNNLNSTKVDRP) is disordered. Positions 497–507 (PATSNNNLNST) are enriched in low complexity.

Belongs to the protein kinase superfamily. Ser/Thr protein kinase family. Mg(2+) is required as a cofactor. Expressed in head and tail neurons and vulval muscles.

The protein resides in the cytoplasm. It catalyses the reaction L-seryl-[protein] + ATP = O-phospho-L-seryl-[protein] + ADP + H(+). The enzyme catalyses L-threonyl-[protein] + ATP = O-phospho-L-threonyl-[protein] + ADP + H(+). With respect to regulation, activated by Ca(2+)/calmodulin. Binding of calmodulin may relieve intrasteric autoinhibition. In terms of biological role, calcium/calmodulin-dependent protein kinase which phosphorylates cmk-1. Component of a calcium-triggered signaling cascade involved in CRE-mediated transcriptional activation, probably through cmk-1-mediated crh-1/CREB phosphorylation. Plays a role in salt-avoidance learning behavior via the phosphorylation of cmk-1. This is Calcium/calmodulin-dependent protein kinase kinase from Caenorhabditis elegans.